Here is a 1212-residue protein sequence, read N- to C-terminus: Nucleolar protein 6 (1212 aa).

Disordered regions lie at residues 1-72 (MGKI…PVSI) and 1156-1212 (KREQ…KSLS). Residues 1197–1212 (LKRKSLIKSRPLKSLS) show a composition bias toward basic residues.

This sequence belongs to the NRAP family. In terms of assembly, part of the small subunit (SSU) processome, composed of more than 70 proteins and the RNA chaperone small nucleolar RNA (snoRNA) U3.

It localises to the nucleus. The protein resides in the nucleolus. The protein localises to the chromosome. Part of the small subunit (SSU) processome, first precursor of the small eukaryotic ribosomal subunit. During the assembly of the SSU processome in the nucleolus, many ribosome biogenesis factors, an RNA chaperone and ribosomal proteins associate with the nascent pre-rRNA and work in concert to generate RNA folding, modifications, rearrangements and cleavage as well as targeted degradation of pre-ribosomal RNA by the RNA exosome. The protein is Nucleolar protein 6 of Drosophila pseudoobscura pseudoobscura (Fruit fly).